The chain runs to 130 residues: Protein ApaG (130 aa).

The region spanning 3 to 127 (KAETRGISVT…FSLDVPHVRR (125 aa)) is the ApaG domain.

This chain is Protein ApaG, found in Methylobacterium sp. (strain 4-46).